An 818-amino-acid polypeptide reads, in one-letter code: Dapper 1-A (818 aa).

A compositionally biased stretch (pro residues) spans 1–10; it reads MKPIPSPEPP. Disordered regions lie at residues 1-30, 60-80, 122-144, 455-486, and 510-530; these read MKPIPSPEPPGQLRLTPRRKDKGEAEWERH, VLSPGTHGQDAAPTGDSPRSD, IDSEKTEETDSRPSSGFYELSDG, NVTPNAPANLPNASSSVCNGSPRESTQNSALL, and ESSSFEERPPLDFKSEGSSSQ. The segment at 1–337 is interaction with tcf7l1-A; the sequence is MKPIPSPEPP…PVRTNKPRTS (337 aa). Over residues 21 to 30 the composition is skewed to basic and acidic residues; that stretch reads DKGEAEWERH. Positions 79 to 130 form a coiled coil; the sequence is SDEQKLLEENISLLKKQLNCLRKRDAGLLSQLHELDKQINDLKIDSEKTEET. Basic and acidic residues predominate over residues 122–132; it reads IDSEKTEETDS. The segment covering 455–485 has biased composition (polar residues); that stretch reads NVTPNAPANLPNASSSVCNGSPRESTQNSAL. Residues 512 to 524 are compositionally biased toward basic and acidic residues; it reads SSFEERPPLDFKS. The PDZ-binding motif lies at 815-818; the sequence is MTTV.

This sequence belongs to the dapper family. As to quaternary structure, interacts with dbf4 and tcf7l1-A. Interacts with dvl2/dsh via the C-terminus. Expressed in the animal and dorsal marginal regions at late blastula and early gastrula stages. Expressed predominantly in the anterior neural plate at neurulation. Expressed mainly in the ectodermal placodes, including the eye anlagen and the otic vesicle, at later stages of development.

It localises to the cytoplasm. It is found in the nucleus. Its function is as follows. Involved in regulation of intracellular signaling pathways during development. Specifically thought to play a role in canonical and/or non-canonical Wnt signaling pathways through interaction with DSH (Dishevelled) family proteins. Binds to dvl2/dsh and impedes the degradation of beta-catenin (ctnnb1-A and possibly ctnnb1-B), thereby enhancing the transcriptional activation of target genes of the Wnt signaling pathway. Also promotes catenin delta/ctnnd1 stability which in turn promotes zbtb33/kaiso sequestration and thus is involved in the regulation of zbtb33/kaiso-mediated transcriptional repression. May also bind to and directly stimulate the transcriptional activity of tcf7l1-A. Required for eye development and neural patterning. The polypeptide is Dapper 1-A (dact1-a) (Xenopus laevis (African clawed frog)).